The following is a 210-amino-acid chain: MADS-box protein AGL42 (210 aa).

Residues 1 to 61 form the MADS-box domain; it reads MVRGKIEMKK…GRLYEFSSSD (61 aa). The region spanning 87-177 is the K-box domain; sequence LQQLKQEASH…HQKNVINPWR (91 aa).

Expressed in quiescent center (QC) cells of root tips. Expressed at the base of the petiole of cotyledons and leaves, in flower buds, petals, sepals and abscission zone of flowers and siliques.

It is found in the nucleus. MADS-box transcription factor that acts with AGL71 and AGL72 in the control of flowering time. Promotes flowering at the shoot apical and axillary meristems. Seems to act through a gibberellin-dependent pathway. Interacts genetically with SOC1 and its expression is directly regulated by SOC1. Plays a role in controlling flower organ senescence and abscission by repressing ethylene responses and regulating the expression of BOP2 and IDA. In Arabidopsis thaliana (Mouse-ear cress), this protein is MADS-box protein AGL42 (AGL42).